The chain runs to 354 residues: MARRNPLLFAIVVTILFVVCYGSALIAQTPPPVDNFVASAHYGSFKKRHGKAFGGDAEEGHRFNAFKQNMQTAYFLNTQNPHAHYDVSGKFADLTPQEFAKLYLNPDYYARHLKDHKEDVHVDDSAPSGVMSVDWRDKGAVTPVKNQGLCGSCWAFSAIGNIEGQWAASGHSLVSLSEQMLVSCDNIDEGCNGGLMDQAMNWIMQSHNGSVFTEASYPYTSGGGTRPPCHDEGEVGAKITGFLSLPHDEERIAEWVEKRGPVAVAVDATTWQLYFGGVVSLCLAWSLNHGVLIVGFNKNAKPPYWIVKNSWGSSWGEKGYIRLAMGSNQCMLKNYPVSATVESPHTPHVPTTTA.

The N-terminal stretch at 1–24 (MARRNPLLFAIVVTILFVVCYGSA) is a signal peptide. A propeptide spans 25 to 125 (LIAQTPPPVD…HKEDVHVDDS (101 aa)) (activation peptide). 3 cysteine pairs are disulfide-bonded: C150/C191, C184/C229, and C282/C330. Residue C153 is part of the active site. Residue N208 is glycosylated (N-linked (GlcNAc...) asparagine). Catalysis depends on residues H289 and N309.

Belongs to the peptidase C1 family.

In terms of biological role, the cysteine proteinases have a potential role in host-parasite interaction and virulence. The protein is Cysteine proteinase 1 (CYS1) of Leishmania pifanoi.